Here is a 424-residue protein sequence, read N- to C-terminus: Glutamyl-tRNA reductase (424 aa).

Residues 49-52, Ser105, 110-112, and Gln116 contribute to the substrate site; these read TCNR and EPQ. Cys50 functions as the Nucleophile in the catalytic mechanism. Residue 185 to 190 coordinates NADP(+); that stretch reads GSGETA.

The protein belongs to the glutamyl-tRNA reductase family. As to quaternary structure, homodimer.

It catalyses the reaction (S)-4-amino-5-oxopentanoate + tRNA(Glu) + NADP(+) = L-glutamyl-tRNA(Glu) + NADPH + H(+). It functions in the pathway porphyrin-containing compound metabolism; protoporphyrin-IX biosynthesis; 5-aminolevulinate from L-glutamyl-tRNA(Glu): step 1/2. Catalyzes the NADPH-dependent reduction of glutamyl-tRNA(Glu) to glutamate 1-semialdehyde (GSA). The protein is Glutamyl-tRNA reductase of Legionella pneumophila (strain Paris).